A 322-amino-acid polypeptide reads, in one-letter code: Phospholipase A1 (322 aa).

The N-terminal stretch at 1–18 (MNFKYSILFICFGTLDRG) is a signal peptide. Cysteine 23 and cysteine 106 are disulfide-bonded. Serine 156 acts as the Nucleophile in catalysis. The Charge relay system role is filled by aspartate 184. Disulfide bonds link cysteine 195-cysteine 200 and cysteine 238-cysteine 246. Histidine 248 (charge relay system) is an active-site residue. Intrachain disulfides connect cysteine 263–cysteine 290, cysteine 264–cysteine 315, and cysteine 283–cysteine 288.

It belongs to the AB hydrolase superfamily. Lipase family. In terms of processing, contains six disulfide bonds. Is not glycosylated. Expressed by the venom gland.

Its subcellular location is the secreted. The catalysed reaction is a 1,2-diacyl-sn-glycero-3-phosphocholine + H2O = a 2-acyl-sn-glycero-3-phosphocholine + a fatty acid + H(+). Catalyzes the hydrolysis of phosphatidylcholine with phospholipase A1 activity. Shows hemolytic activity. Acts as an allergen. The sequence is that of Phospholipase A1 from Polybia paulista (Neotropical social wasp).